Consider the following 419-residue polypeptide: MPGRGRCPDCGSTELVEDSHYSQSQLVCSDCGCVVTEGVLTTTFSDEGNLREVTYSRSTGENEQVSRSQQRGLRRVRDLCRVLQLPPTFEDTAVAYYQQAYRHSGIRAARLQKKEVLVGCCVLITCRQHNWPLTMGAICTLLYADLDVFSSTYMQIVKLLGLDVPSLCLAELVKTYCSSFKLFQASPSVPAKYVEDKEKMLSRTMQLVELANETWLVTGRHPLPVITAATFLAWQSLQPADRLSCSLARFCKLANVDLPYPASSRLQELLAVLLRMAEQLAWLRVLRLDKRSVVKHIGDLLQHRQSLVRSAFRDGTAEVETREKEPPGWGQGQGEGEVGNNSLGLPQGKRPASPALLLPPCMLKSPKRICPVPPVSTVTGDENISDSEIEQYLRTPQEVRDFQRAQAARQAATSVPNPP.

The segment at 2–36 (PGRGRCPDCGSTELVEDSHYSQSQLVCSDCGCVVT) adopts a TFIIB-type zinc-finger fold. Zn(2+)-binding residues include cysteine 7, cysteine 10, cysteine 28, and cysteine 31. Tandem repeats lie at residues 72–157 (GLRR…MQIV) and 173–249 (VKTY…SLAR). The tract at residues 108 to 114 (AARLQKK) is interaction with target DNA. The span at 314 to 326 (DGTAEVETREKEP) shows a compositional bias: basic and acidic residues. Positions 314 to 351 (DGTAEVETREKEPPGWGQGQGEGEVGNNSLGLPQGKRP) are disordered. At serine 353 the chain carries Phosphoserine. A required for the formation of a ternary complex with DNA and TBP; not required for interaction with TBP in the absence of DNA region spans residues 357-363 (LLPPCML). A Cysteine sulfenic acid (-SOH) modification is found at cysteine 361. The required for interaction with TBP and formation of a ternary complex with DNA and TBP stretch occupies residues 365 to 419 (SPKRICPVPPVSTVTGDENISDSEIEQYLRTPQEVRDFQRAQAARQAATSVPNPP).

It belongs to the TFIIB family. As to quaternary structure, component of TFIIIB complexes. The TFIIIB complex has two activities, alpha and beta. The TFIIIB-alpha activity complex is composed of TBP, BDP1, and a complex containing both BRF2 and at least four stably associated proteins; this complex inhibits the transcription by pol III via its phosphorylation by CK2; YY1 facilitates the TFIIIB-alpha complex formation. Interacts with TBP; this interaction promotes recruitment of BRF2 to TATA box-containing promoters. Interacts with TBP and the BURE sequence (GC-rich sequence downstream from the TATA box) to form a strong ternary complex which is joined by BDP1; this ternary complex stimulates pol III transcription. Forms a trimeric complex composed of TBP, BRF2 and mini-SNAPc complex (SNAP43, SNAP50, and the N-terminal third of SNAP190) on the promoter. Assembly of the TBP-BRF2 complex is stimulated by SNAP190. Interacts with MAF1 and SNAPC4. Post-translationally, in response to oxidative stress, Cys-361 is reversibly oxidized to cysteine sulfenic acid. Oxidation of Cys-361 impairs formation of a ternary complex with TBP and DNA and down-regulates expression of target genes in response to oxidative stress.

It localises to the nucleus. Functionally, general activator of RNA polymerase III transcription. Factor exclusively required for RNA polymerase III transcription of genes with promoter elements upstream of the initiation sites. Contributes to the regulation of gene expression; functions as activator in the absence of oxidative stress. Down-regulates expression of target genes in response to oxidative stress. Overexpression protects cells against apoptosis in response to oxidative stress. In Homo sapiens (Human), this protein is Transcription factor IIIB 50 kDa subunit (BRF2).